Here is a 209-residue protein sequence, read N- to C-terminus: Uracil phosphoribosyltransferase (209 aa).

5-phospho-alpha-D-ribose 1-diphosphate-binding positions include Arg79, Arg104, and 131–139 (DPMLATGGS). Residues Ile194 and 199–201 (GDA) contribute to the uracil site. Position 200 (Asp200) interacts with 5-phospho-alpha-D-ribose 1-diphosphate.

The protein belongs to the UPRTase family. It depends on Mg(2+) as a cofactor.

It catalyses the reaction UMP + diphosphate = 5-phospho-alpha-D-ribose 1-diphosphate + uracil. Its pathway is pyrimidine metabolism; UMP biosynthesis via salvage pathway; UMP from uracil: step 1/1. Its activity is regulated as follows. Allosterically activated by GTP. Catalyzes the conversion of uracil and 5-phospho-alpha-D-ribose 1-diphosphate (PRPP) to UMP and diphosphate. The sequence is that of Uracil phosphoribosyltransferase from Desulfitobacterium hafniense (strain DSM 10664 / DCB-2).